The sequence spans 118 residues: Small ribosomal subunit protein uS13 (118 aa).

The segment at 93 to 118 (RGLPVRGQRTKTNARTRKGPRKPIRK) is disordered.

The protein belongs to the universal ribosomal protein uS13 family. As to quaternary structure, part of the 30S ribosomal subunit. Forms a loose heterodimer with protein S19. Forms two bridges to the 50S subunit in the 70S ribosome.

Located at the top of the head of the 30S subunit, it contacts several helices of the 16S rRNA. In the 70S ribosome it contacts the 23S rRNA (bridge B1a) and protein L5 of the 50S subunit (bridge B1b), connecting the 2 subunits; these bridges are implicated in subunit movement. Contacts the tRNAs in the A and P-sites. This is Small ribosomal subunit protein uS13 from Pseudomonas paraeruginosa (strain DSM 24068 / PA7) (Pseudomonas aeruginosa (strain PA7)).